The following is a 343-amino-acid chain: Palmitoyltransferase ZDHHC4 (343 aa).

The Lumenal segment spans residues Met1–Asp2. Residues Phe3–Ile23 form a helical membrane-spanning segment. The Cytoplasmic portion of the chain corresponds to Gly24 to Thr67. The chain crosses the membrane as a helical span at residues Phe68–Phe88. Over Gly89 to Glu95 the chain is Lumenal. A helical membrane pass occupies residues Phe96–Thr116. Topologically, residues Leu117–Ser196 are cytoplasmic. The DHHC domain occupies Val149–Phe199. Cys179 (S-palmitoyl cysteine intermediate) is an active-site residue. The helical transmembrane segment at Tyr197–Val217 threads the bilayer. Residues Arg218 to Arg255 are Lumenal-facing. The helical transmembrane segment at Ile256–Phe276 threads the bilayer. Residues Cys277–Lys343 are Cytoplasmic-facing. The Di-lysine motif signature appears at Arg340 to Lys343.

Belongs to the DHHC palmitoyltransferase family. In terms of assembly, interacts with CPT1A.

It localises to the endoplasmic reticulum membrane. The protein resides in the golgi apparatus membrane. It is found in the cell membrane. It catalyses the reaction L-cysteinyl-[protein] + hexadecanoyl-CoA = S-hexadecanoyl-L-cysteinyl-[protein] + CoA. Its function is as follows. Palmitoyltransferase that could catalyze the addition of palmitate onto protein substrates including the D(2) dopamine receptor DRD2, GSK3B or MAVS. Mediates GSK3B palmitoylation to prevent its AKT1-mediated phosphorylation leading to activation of the STAT3 signaling pathway. Also catalyzes MAVS palmitoylation which promotes its stabilization and activation by inhibiting 'Lys-48'- but facilitating 'Lys-63'-linked ubiquitination. The protein is Palmitoyltransferase ZDHHC4 of Bos taurus (Bovine).